The chain runs to 101 residues: Movement protein (101 aa).

Residues 1–22 are disordered; that stretch reads MDPQNSFLLQPRVPTAAPTSGG. A helical transmembrane segment spans residues 30–50; sequence EVAILSFVGLICFYLLYLWVL. A disordered region spans residues 79-101; that stretch reads NPIPNTQAPPSQGNPGPFVPGTG. Over residues 80–92 the composition is skewed to polar residues; sequence PIPNTQAPPSQGN.

This sequence belongs to the mastrevirus movement protein family. As to quaternary structure, interacts with the capsid protein (CP). Part of a MP-CP-viral DNA complex.

The protein localises to the host membrane. Involved in the viral transport within, and between cells. The sequence is that of Movement protein from Avena sativa (Oat).